Reading from the N-terminus, the 134-residue chain is Global transcriptional regulator Spx (134 aa).

Cysteine 10 and cysteine 13 form a disulfide bridge.

The protein belongs to the ArsC family. Spx subfamily. As to quaternary structure, interacts with the C-terminal domain of the alpha subunit of the RNAP.

The protein resides in the cytoplasm. In terms of biological role, global transcriptional regulator that plays a key role in stress response and exerts either positive or negative regulation of genes. Acts by interacting with the C-terminal domain of the alpha subunit of the RNA polymerase (RNAP). This interaction can enhance binding of RNAP to the promoter region of target genes and stimulate their transcription, or block interaction of RNAP with activator. This Streptococcus pyogenes serotype M6 (strain ATCC BAA-946 / MGAS10394) protein is Global transcriptional regulator Spx.